The sequence spans 151 residues: UPF0735 ACT domain-containing protein SAUSA300_1599 (151 aa).

The ACT domain occupies 74 to 149 (TLILYVTDIV…YVSKVELISM (76 aa)).

Belongs to the UPF0735 family.

In Staphylococcus aureus (strain USA300), this protein is UPF0735 ACT domain-containing protein SAUSA300_1599.